Reading from the N-terminus, the 80-residue chain is Acyl carrier protein (80 aa).

Positions 4 to 79 (EAILEKVRSI…DAVKYIEDKQ (76 aa)) constitute a Carrier domain. Position 39 is an O-(pantetheine 4'-phosphoryl)serine (serine 39).

Belongs to the acyl carrier protein (ACP) family. 4'-phosphopantetheine is transferred from CoA to a specific serine of apo-ACP by AcpS. This modification is essential for activity because fatty acids are bound in thioester linkage to the sulfhydryl of the prosthetic group.

It localises to the cytoplasm. The protein operates within lipid metabolism; fatty acid biosynthesis. Its function is as follows. Carrier of the growing fatty acid chain in fatty acid biosynthesis. This chain is Acyl carrier protein, found in Parasynechococcus marenigrum (strain WH8102).